A 337-amino-acid polypeptide reads, in one-letter code: Probable dihydroorotase (337 aa).

Residues His12, His14, Lys95, His132, His170, and Asp240 each contribute to the Zn(2+) site. Lys95 is subject to N6-carboxylysine.

The protein belongs to the metallo-dependent hydrolases superfamily. DHOase family. Class II DHOase subfamily. Zn(2+) serves as cofactor.

The enzyme catalyses (S)-dihydroorotate + H2O = N-carbamoyl-L-aspartate + H(+). The protein operates within pyrimidine metabolism; UMP biosynthesis via de novo pathway; (S)-dihydroorotate from bicarbonate: step 3/3. The protein is Probable dihydroorotase (ura2) of Schizosaccharomyces pombe (strain 972 / ATCC 24843) (Fission yeast).